Reading from the N-terminus, the 292-residue chain is ABC transporter ATP-binding protein YtrB (292 aa).

The ABC transporter domain maps to 2–227 (IELRQLSKAI…YIKIQMAFDT (226 aa)). 34 to 41 (GRNGSGKT) contributes to the ATP binding site.

This sequence belongs to the ABC transporter superfamily. The complex is composed of 2 ATP-binding proteins (YtrB and YtrE), 2 transmembrane proteins (YtrC and YtrD) and a solute-binding protein (YtrF).

Its subcellular location is the cell membrane. In terms of biological role, part of the ABC transporter complex YtrBCDEF that plays a role in acetoin utilization during stationary phase and sporulation. This is ABC transporter ATP-binding protein YtrB (ytrB) from Bacillus subtilis (strain 168).